Consider the following 421-residue polypeptide: Serine hydroxymethyltransferase (421 aa).

(6S)-5,6,7,8-tetrahydrofolate is bound by residues Leu-121 and 125–127; that span reads GHL. Lys-230 carries the N6-(pyridoxal phosphate)lysine modification. Residue 355 to 357 participates in (6S)-5,6,7,8-tetrahydrofolate binding; that stretch reads SPF.

Belongs to the SHMT family. Homodimer. Pyridoxal 5'-phosphate is required as a cofactor.

Its subcellular location is the cytoplasm. It catalyses the reaction (6R)-5,10-methylene-5,6,7,8-tetrahydrofolate + glycine + H2O = (6S)-5,6,7,8-tetrahydrofolate + L-serine. It functions in the pathway one-carbon metabolism; tetrahydrofolate interconversion. The protein operates within amino-acid biosynthesis; glycine biosynthesis; glycine from L-serine: step 1/1. In terms of biological role, catalyzes the reversible interconversion of serine and glycine with tetrahydrofolate (THF) serving as the one-carbon carrier. This reaction serves as the major source of one-carbon groups required for the biosynthesis of purines, thymidylate, methionine, and other important biomolecules. Also exhibits THF-independent aldolase activity toward beta-hydroxyamino acids, producing glycine and aldehydes, via a retro-aldol mechanism. This chain is Serine hydroxymethyltransferase, found in Cellvibrio japonicus (strain Ueda107) (Pseudomonas fluorescens subsp. cellulosa).